A 666-amino-acid chain; its full sequence is MEGVSALLARCPTAGLAGGLGVTACAAAGVLLYRIARRMKPTHTMVNCWFCNQDTLVPYGNRNCWDCPHCEQYNGFQENGDYNKPIPAQYLEHLNHVVSSAPSLRDPSQPQQWVSSQVLLCKRCNHHQTTKIKQLAAFAPREEGRYDEEVEVYRHHLEQMYKLCRPCQAAVEYYIKHQNRQLRALLLSHQFKRREADQTHAQNFSSAVKSPVQVILLRALAFLACAFLLTTALYGASGHFAPGTTVPLALPPGGNGSATPDNGTTPGAEGWRQLLGLLPEHMAEKLCEAWAFGQSHQTGVVALGLLTCLLAMLLAGRIRLRRIDAFCTCLWALLLGLHLAEQHLQAASPSWLDTLKFSTTSLCCLVGFTAAVATRKATGPRRFRPRRFFPGDSAGLFPTSPSLAIPHPSVGGSPASLFIPSPPSFLPLANQQLFRSPRRTSPSSLPGRLSRALSLGTIPSLTRADSGYLFSGSRPPSQVSRSGEFPVSDYFSLLSGSCPSSPLPSPAPSVAGSVASSSGSLRHRRPLISPARLNLKGQKLLLFPSPPGEAPTTPSSSDEHSPHNGSLFTMEPPHVPRKPPLQDVKHALDLRSKLERGSACSNRSIKKEDDSSQSSTCVVDTTTRGCSEEAATWRGRFGPSLVRGLLAVSLAANALFTSVFLYQSLR.

Residue M1 is modified to N-acetylmethionine. Over M1–Q213 the chain is Nuclear. A helical transmembrane segment spans residues V214–Y234. The Perinuclear space segment spans residues G235–Q297. The chain crosses the membrane as a helical span at residues T298 to I318. The Nuclear portion of the chain corresponds to R319–R322. A helical membrane pass occupies residues I323–H343. The Perinuclear space segment spans residues L344 to K356. A helical transmembrane segment spans residues F357 to T374. The Nuclear segment spans residues R375–G644. S441, S444, S450, S454, S466, S477, and S480 each carry phosphoserine. The segment at P502 to L581 is disordered. A compositionally biased stretch (low complexity) spans P508 to S520. At S529 the chain carries Phosphoserine. The helical transmembrane segment at L645 to L665 threads the bilayer. Position 666 (R666) is a topological domain, perinuclear space.

The protein belongs to the TMEM201 family. In terms of assembly, interacts with SUN2 and LMNA. May bind to Ran GTPase; has a greater affinity for Ran-GTP over Ran-GDP. Interacts with EMD.

The protein resides in the nucleus inner membrane. Its subcellular location is the cytoplasm. It is found in the cytoskeleton. It localises to the spindle pole. Functionally, critical regulator of angiogenesis and endothelial cell (EC) migration. Promotes the migration of endothelial cells, which is essential for angiogenesis. Interacts with the linker of nucleoskeleton and cytoskeleton (LINC) complex, which plays a vital role in connecting the cell's cytoskeleton to the nuclear envelope. This interaction is essential for maintaining cellular structure and facilitating the movement of endothelial cells, which is critical for proper vascular development. Involved in nuclear movement during fibroblast polarization and migration. Overexpression can recruit Ran GTPase to the nuclear periphery. Its function is as follows. May define a distinct membrane domain in the vicinity of the mitotic spindle. Involved in the organization of the nuclear envelope implicating EMD, SUN1 and A-type lamina. The chain is Transmembrane protein 201 (TMEM201) from Homo sapiens (Human).